We begin with the raw amino-acid sequence, 125 residues long: Egg cell-secreted protein 1.2 (125 aa).

The signal sequence occupies residues 1–22; that stretch reads MASNTSFLFATIAILLVLNISG.

This sequence belongs to the plant egg cell-secreted peptide family. Restricted to female reproductive tissues, specifically accumulating in storage vesicles of the unfertilized egg cell.

The protein localises to the cytoplasmic vesicle. It is found in the secreted. Its function is as follows. Involved in the regulation of gamete interactions during the double fertilization and to prevent multiple-pollen tube attraction; mediates the redistribution of the gamete fusogen HAP2/GCS1 to the cell surface after secretion upon sperm arrival. In Arabidopsis thaliana (Mouse-ear cress), this protein is Egg cell-secreted protein 1.2 (EC1.2).